The sequence spans 749 residues: Transcription factor RFX3 (749 aa).

The RFX-type winged-helix DNA-binding region spans 183–258 (HLQWLLDNYE…YHYYGIRVKP (76 aa)). Positions 663 to 699 (VSPGNLDKDEGSEVESETDEDLDDSSEPRAKREKTEL) are disordered. Residues 674–687 (SEVESETDEDLDDS) are compositionally biased toward acidic residues. Basic and acidic residues predominate over residues 688–698 (SEPRAKREKTE).

The protein belongs to the RFX family. In terms of assembly, heterodimer; heterodimerizes with RFX1 and RFX2, and RFX6. Expressed in ciliated cells of the node and in the ciliated ependymal cells of the subcommissural organ (SCO), choroid plexuses (CP) and ventricular walls during embryonic and postnatal development. Expressed in developing and mature pancreatic endocrine cells during embryogenesis and in adults (at protein level).

Its subcellular location is the nucleus. Functionally, transcription factor required for ciliogenesis and islet cell differentiation during endocrine pancreas development. Essential for the differentiation of nodal monocilia and left-right asymmetry specification during embryogenesis. Required for the biogenesis of motile cilia by governing growth and beating efficiency of motile cells. Also required for ciliated ependymal cell differentiation. Together with RFX6, participates in the differentiation of 4 of the 5 islet cell types during endocrine pancreas development, with the exception of pancreatic PP (polypeptide-producing) cells. Regulates transcription by forming a heterodimer with another RFX protein and binding to the X-box in the promoter of target genes. Regulates the expression of genes involved in ciliary assembly (DYNC2LI1, FOXJ1 and BBS4) and genes involved in ciliary motility (DNAH11, DNAH9 and DNAH5). Represses transcription of MAP1A in non-neuronal cells but not in neuronal cells. The polypeptide is Transcription factor RFX3 (Rfx3) (Mus musculus (Mouse)).